A 163-amino-acid polypeptide reads, in one-letter code: Cyclic pyranopterin monophosphate synthase (163 aa).

Substrate is bound by residues 74-76 (MCH) and 111-112 (ME). Residue Asp126 is part of the active site.

This sequence belongs to the MoaC family. As to quaternary structure, homohexamer; trimer of dimers.

It catalyses the reaction (8S)-3',8-cyclo-7,8-dihydroguanosine 5'-triphosphate = cyclic pyranopterin phosphate + diphosphate. It participates in cofactor biosynthesis; molybdopterin biosynthesis. In terms of biological role, catalyzes the conversion of (8S)-3',8-cyclo-7,8-dihydroguanosine 5'-triphosphate to cyclic pyranopterin monophosphate (cPMP). This Desulfitobacterium hafniense (strain DSM 10664 / DCB-2) protein is Cyclic pyranopterin monophosphate synthase.